We begin with the raw amino-acid sequence, 290 residues long: PIH1 domain-containing protein 1 (290 aa).

3 positions are modified to phosphoserine: serine 12, serine 16, and serine 173.

This sequence belongs to the PIH1 family. In terms of assembly, component of the R2TP complex composed at least of RUVBL1, RUVBL2, RPAP3 and PIHD1. Component of the PAQosome complex which is responsible for the biogenesis of several protein complexes and which consists of R2TP complex members RUVBL1, RUVBL2, RPAP3 and PIH1D1, URI complex members PFDN2, PFDN6, PDRG1, UXT and URI1 as well as ASDURF, POLR2E and DNAAF10/WDR92. Interacts with phosphorylated TELO2. Mediates interaction of TELO2 with the R2TP complex. Interacts with phosphorylated ECD, EFTUD2/SNRP116, RPB1 and UBR5 and with RPB1 in a phosphorylation-independent manner. Interacts with the core C/D box snoRNP particle components NOP58 and FBL and with RUVBL1/TIP49. Interacts with RPAP3 and DNAAF10. Interacts with histone H4 and with SWI/SNF complex member SMARCB1/SNF5. Interacts with the mTORC1 complex member RPTOR. Interacts with isoform 1 of MSL1.

It is found in the nucleus. Involved in the assembly of C/D box small nucleolar ribonucleoprotein (snoRNP) particles. Recruits the SWI/SNF complex to the core promoter of rRNA genes and enhances pre-rRNA transcription. Mediates interaction of TELO2 with the R2TP complex which is necessary for the stability of MTOR and SMG1. Positively regulates the assembly and activity of the mTORC1 complex. In Mus musculus (Mouse), this protein is PIH1 domain-containing protein 1 (Pih1d1).